A 102-amino-acid chain; its full sequence is Cytochrome b (102 aa).

3 consecutive transmembrane segments (helical) span residues 1 to 21, 45 to 66, and 81 to 101; these read FGSLLGVCLITQILTGLFLAM, WLIRNIHTNGASLFFICIYMHI, and WNIGVILFLMTMATAFMGYVF. Positions 51 and 65 each coordinate heme b.

Belongs to the cytochrome b family. As to quaternary structure, the cytochrome bc1 complex contains 3 respiratory subunits (MT-CYB, CYC1 and UQCRFS1), 2 core proteins (UQCRC1 and UQCRC2) and probably 6 low-molecular weight proteins. It depends on heme b as a cofactor.

It localises to the mitochondrion inner membrane. Its function is as follows. Component of the ubiquinol-cytochrome c reductase complex (complex III or cytochrome b-c1 complex) that is part of the mitochondrial respiratory chain. The b-c1 complex mediates electron transfer from ubiquinol to cytochrome c. Contributes to the generation of a proton gradient across the mitochondrial membrane that is then used for ATP synthesis. The polypeptide is Cytochrome b (mt-cyb) (Plethodon yonahlossee (Yonahlossee salamander)).